A 184-amino-acid chain; its full sequence is Interferon alpha-1 (184 aa).

The first 23 residues, 1–23 (MALPVSLLMALVVLSCHSICSLG), serve as a signal peptide directing secretion. Disulfide bonds link Cys24–Cys122 and Cys52–Cys162.

The protein belongs to the alpha/beta interferon family. As to quaternary structure, interacts with CR2.

It is found in the secreted. Functionally, produced by macrophages, IFN-alpha have antiviral activities. Interferon stimulates the production of two enzymes: a protein kinase and an oligoadenylate synthetase. This chain is Interferon alpha-1, found in Equus caballus (Horse).